A 623-amino-acid polypeptide reads, in one-letter code: UvrABC system protein C (623 aa).

A GIY-YIG domain is found at 21-100; it reads AEPGVYLMRD…IKTHQPPYNV (80 aa). A UVR domain is found at 210 to 245; it reads DELIRELQEKMIQAAEQENYEAAARYRDQIRGLEQL.

It belongs to the UvrC family. As to quaternary structure, interacts with UvrB in an incision complex.

Its subcellular location is the cytoplasm. The UvrABC repair system catalyzes the recognition and processing of DNA lesions. UvrC both incises the 5' and 3' sides of the lesion. The N-terminal half is responsible for the 3' incision and the C-terminal half is responsible for the 5' incision. This Synechococcus sp. (strain JA-2-3B'a(2-13)) (Cyanobacteria bacterium Yellowstone B-Prime) protein is UvrABC system protein C.